Here is a 137-residue protein sequence, read N- to C-terminus: Large ribosomal subunit protein uL16 (137 aa).

Belongs to the universal ribosomal protein uL16 family. Part of the 50S ribosomal subunit.

Its function is as follows. Binds 23S rRNA and is also seen to make contacts with the A and possibly P site tRNAs. In Rhodopseudomonas palustris (strain BisB18), this protein is Large ribosomal subunit protein uL16.